A 364-amino-acid chain; its full sequence is BOLA class I histocompatibility antigen, alpha chain BL3-7 (364 aa).

An N-terminal signal peptide occupies residues 1-27; it reads MRVMRVMRPRTLLLLLSGVLVLTETLA. An alpha-1 region spans residues 28–117; sequence GSHSLRYFYT…LRGYYNQSET (90 aa). At 28-310 the chain is on the extracellular side; the sequence is GSHSLRYFYT…WEPPQTSFLI (283 aa). N-linked (GlcNAc...) asparagine glycosylation occurs at Asn-113. The segment at 118 to 209 is alpha-2; sequence GSHNIQAMYG…ENGKDTLLRA (92 aa). Intrachain disulfides connect Cys-128-Cys-191 and Cys-230-Cys-286. The alpha-3 stretch occupies residues 210–301; the sequence is DPPKAHVTHH…GLQEPLTLRW (92 aa). The Ig-like C1-type domain maps to 212 to 298; it reads PKAHVTHHSI…QHEGLQEPLT (87 aa). The interval 302-310 is connecting peptide; that stretch reads EPPQTSFLI. A helical transmembrane segment spans residues 311–331; it reads MGIIVGLVLLVVALVAGAVIW. The Cytoplasmic segment spans residues 332 to 364; sequence RKKRSGEKGRIYTQAASSDSAQGSDVSLTVPKV. Residues Ser-355 and Ser-358 each carry the phosphoserine modification.

Belongs to the MHC class I family. In terms of assembly, heterodimer of an alpha chain and a beta chain (beta-2-microglobulin).

The protein resides in the membrane. Its function is as follows. Involved in the presentation of foreign antigens to the immune system. This is BOLA class I histocompatibility antigen, alpha chain BL3-7 from Bos taurus (Bovine).